A 489-amino-acid polypeptide reads, in one-letter code: Glutamate--tRNA ligase (489 aa).

Positions 12 to 22 (PSPTGIPHVGM) match the 'HIGH' region motif. A 'KMSKS' region motif is present at residues 256 to 260 (KLSKR). Lys259 contributes to the ATP binding site.

It belongs to the class-I aminoacyl-tRNA synthetase family. Glutamate--tRNA ligase type 1 subfamily. As to quaternary structure, monomer.

Its subcellular location is the cytoplasm. The catalysed reaction is tRNA(Glu) + L-glutamate + ATP = L-glutamyl-tRNA(Glu) + AMP + diphosphate. Catalyzes the attachment of glutamate to tRNA(Glu) in a two-step reaction: glutamate is first activated by ATP to form Glu-AMP and then transferred to the acceptor end of tRNA(Glu). This chain is Glutamate--tRNA ligase, found in Mycobacterium marinum (strain ATCC BAA-535 / M).